Reading from the N-terminus, the 353-residue chain is Melatonin receptor type 1A (353 aa).

The Extracellular portion of the chain corresponds to 1–32; it reads MKGNVSELLNATQQAPGGGEGGRPRPSWLAST. Residues N4 and N10 are each glycosylated (N-linked (GlcNAc...) asparagine). The helical transmembrane segment at 33–53 threads the bilayer; sequence LAFILIFTIVVDILGNLLVIL. Over 54-66 the chain is Cytoplasmic; the sequence is SVYRNKKLRNSGN. The chain crosses the membrane as a helical span at residues 67–87; sequence IFVVSLAVADLVVAVYPYPLV. Topologically, residues 88-105 are extracellular; it reads LTSILNNGWNLGYLHCQV. The cysteines at positions 103 and 180 are disulfide-linked. Residues 106-126 traverse the membrane as a helical segment; sequence SAFLMGLSVIGSIFNITGIAM. Topologically, residues 127–145 are cytoplasmic; that stretch reads NRYCYICHSLKYDKIYSNK. A helical transmembrane segment spans residues 146–166; that stretch reads NSLCYVFLIWMLTLIAIMPNL. The Extracellular portion of the chain corresponds to 167–190; it reads QTGTLQYDPRIYSCTFTQSVSSAY. Residues 191–211 traverse the membrane as a helical segment; that stretch reads TIAVVVFHFIVPMIIVIFCYL. The Cytoplasmic segment spans residues 212–243; that stretch reads RIWVLVLQVRRRVKPDNKPKLKPQDFRNFVTM. The chain crosses the membrane as a helical span at residues 244 to 264; that stretch reads FVVFVLFAICWAPLNLIGLIV. At 265-277 the chain is on the extracellular side; sequence ASDPATMVPRIPE. A helical transmembrane segment spans residues 278-298; sequence WLFVASYYLAYFNSCLNAIIY. The Cytoplasmic portion of the chain corresponds to 299–353; sequence GLLNQNFRKEYKKIIVSLCTAKMFFVESSNEEADKIKCKPSPLIPNNNLIKVDSV.

The protein belongs to the G-protein coupled receptor 1 family.

It localises to the cell membrane. Its function is as follows. High affinity receptor for melatonin. Likely to mediate the reproductive and circadian actions of melatonin. The activity of this receptor is mediated by pertussis toxin sensitive G proteins that inhibit adenylate cyclase activity. Possibly involved in sleep induction, by melatonin activation of the potassium channel KCNMA1/BK and the dissociation of G-beta and G-gamma subunits, thereby decreasing synaptic transmission. In Mus musculus (Mouse), this protein is Melatonin receptor type 1A (Mtnr1a).